Here is a 252-residue protein sequence, read N- to C-terminus: Hydroxyacylglutathione hydrolase (252 aa).

Residues H54, H56, D58, H59, H113, D132, and H170 each contribute to the Zn(2+) site.

It belongs to the metallo-beta-lactamase superfamily. Glyoxalase II family. As to quaternary structure, monomer. Zn(2+) is required as a cofactor.

The enzyme catalyses an S-(2-hydroxyacyl)glutathione + H2O = a 2-hydroxy carboxylate + glutathione + H(+). It functions in the pathway secondary metabolite metabolism; methylglyoxal degradation; (R)-lactate from methylglyoxal: step 2/2. Functionally, thiolesterase that catalyzes the hydrolysis of S-D-lactoyl-glutathione to form glutathione and D-lactic acid. The protein is Hydroxyacylglutathione hydrolase of Synechococcus sp. (strain JA-2-3B'a(2-13)) (Cyanobacteria bacterium Yellowstone B-Prime).